We begin with the raw amino-acid sequence, 530 residues long: Bifunctional purine biosynthesis protein PurH (530 aa).

The MGS-like domain occupies 1-148 (MNNARPIHRA…KNHKDVAIVV (148 aa)).

The protein belongs to the PurH family.

The enzyme catalyses (6R)-10-formyltetrahydrofolate + 5-amino-1-(5-phospho-beta-D-ribosyl)imidazole-4-carboxamide = 5-formamido-1-(5-phospho-D-ribosyl)imidazole-4-carboxamide + (6S)-5,6,7,8-tetrahydrofolate. It carries out the reaction IMP + H2O = 5-formamido-1-(5-phospho-D-ribosyl)imidazole-4-carboxamide. Its pathway is purine metabolism; IMP biosynthesis via de novo pathway; 5-formamido-1-(5-phospho-D-ribosyl)imidazole-4-carboxamide from 5-amino-1-(5-phospho-D-ribosyl)imidazole-4-carboxamide (10-formyl THF route): step 1/1. It participates in purine metabolism; IMP biosynthesis via de novo pathway; IMP from 5-formamido-1-(5-phospho-D-ribosyl)imidazole-4-carboxamide: step 1/1. This Vibrio cholerae serotype O1 (strain M66-2) protein is Bifunctional purine biosynthesis protein PurH.